We begin with the raw amino-acid sequence, 274 residues long: Large ribosomal subunit protein uL2 (274 aa).

Disordered regions lie at residues 28–55 (APHA…RHVG) and 224–274 (VAMN…RRRK). Residues 263–274 (KRTDKMIVRRRK) show a composition bias toward basic and acidic residues.

The protein belongs to the universal ribosomal protein uL2 family. As to quaternary structure, part of the 50S ribosomal subunit. Forms a bridge to the 30S subunit in the 70S ribosome.

Its function is as follows. One of the primary rRNA binding proteins. Required for association of the 30S and 50S subunits to form the 70S ribosome, for tRNA binding and peptide bond formation. It has been suggested to have peptidyltransferase activity; this is somewhat controversial. Makes several contacts with the 16S rRNA in the 70S ribosome. The protein is Large ribosomal subunit protein uL2 of Pseudomonas fluorescens (strain ATCC BAA-477 / NRRL B-23932 / Pf-5).